Consider the following 37-residue polypeptide: Serrulin (37 aa).

The tract at residues 16 to 37 (FGGGGIGGGGFGGGYGGGKIKG) is disordered. Residue Lys-36 is modified to Lysine amide.

In terms of tissue distribution, expressed in hemocytes (at protein level).

The protein localises to the secreted. In terms of biological role, antimicrobial protein with activity against Gram-positive and Gram-negative bacteria, filamentous fungus, and yeast. Was tested against Micrococcus luteus A270 (MIC=0.5-1 uM), Echerichia coli SBS 363 (MIC=9-16 uM), Pseudomonas aeruginosa (MIC=0.01-0.3 uM), Aspergillus niger (MIC=3-6 uM), and Candida albicans MDM8 (MIC=1.5-3 uM). Has no hemolytic activity against human erythrocytes. This Tityus serrulatus (Brazilian scorpion) protein is Serrulin.